We begin with the raw amino-acid sequence, 340 residues long: MIRIENLTKIYTSRKEQVVAIEDISLDIPKGAIYGIIGLSGAGKSTLVRCINRLEEPTGGKIIIDGQDLTAMSAVELRQARQKIGMIFQHFHLLQSRTVFDNIAFPLEIAGFKKPEIEARVKELLPLVGLEDKAHVYPSQLSGGQKQRVGIARALATNPKVLLCDEATSALDPQTTLSILNLLKDINQRFGLTIIMITHEMKVVKEICTDVAVIHESKIAEQGPVESVFIQPQSSVAKEFISTVFPNELPEDLLRELATHPNSQIVRIQFLGSRASDPIIADLMKECEVRANILYGSIDHLRSTLFGTLTLELQGDPGQLALAHQYLAQRELKVEVIQNV.

Residues 2-241 (IRIENLTKIY…PQSSVAKEFI (240 aa)) enclose the ABC transporter domain. 38–45 (GLSGAGKS) lines the ATP pocket.

It belongs to the ABC transporter superfamily. Methionine importer (TC 3.A.1.24) family. As to quaternary structure, the complex is composed of two ATP-binding proteins (MetN), two transmembrane proteins (MetI) and a solute-binding protein (MetQ).

It is found in the cell membrane. The catalysed reaction is L-methionine(out) + ATP + H2O = L-methionine(in) + ADP + phosphate + H(+). It catalyses the reaction D-methionine(out) + ATP + H2O = D-methionine(in) + ADP + phosphate + H(+). Part of the ABC transporter complex MetNIQ involved in methionine import. Responsible for energy coupling to the transport system. The polypeptide is Methionine import ATP-binding protein MetN (Desulfitobacterium hafniense (strain Y51)).